We begin with the raw amino-acid sequence, 535 residues long: GMP synthase [glutamine-hydrolyzing] (535 aa).

The 191-residue stretch at 21–211 (LIVILDFGSQ…VYHICDCEPT (191 aa)) folds into the Glutamine amidotransferase type-1 domain. Cysteine 98 acts as the Nucleophile in catalysis. Active-site residues include histidine 185 and glutamate 187. A GMPS ATP-PPase domain is found at 212 to 410 (WTTAAFVEEA…LGLPEEIVQR (199 aa)). 239–245 (SGGVDSS) is an ATP binding site.

Homodimer.

The catalysed reaction is XMP + L-glutamine + ATP + H2O = GMP + L-glutamate + AMP + diphosphate + 2 H(+). The protein operates within purine metabolism; GMP biosynthesis; GMP from XMP (L-Gln route): step 1/1. Its function is as follows. Catalyzes the synthesis of GMP from XMP. This chain is GMP synthase [glutamine-hydrolyzing], found in Thermosynechococcus vestitus (strain NIES-2133 / IAM M-273 / BP-1).